Here is a 1175-residue protein sequence, read N- to C-terminus: Structural maintenance of chromosomes protein 2-1 (1175 aa).

Residues 2–1161 enclose the Zinc-hook domain; the sequence is HIKEICLEGF…NVLFRTKFVD (1160 aa). 32 to 39 lines the ATP pocket; that stretch reads GLNGSGKS. Residues 172–508 are a coiled coil; sequence RMYENKKEAA…AQLANFQFTY (337 aa). The region spanning 518–638 is the SMC hinge domain; the sequence is SKVKGVVAKL…KTTDVAKEVA (121 aa). A coiled-coil region spans residues 673 to 1028; sequence LRKLHDLAEA…ELDEKKKETL (356 aa).

This sequence belongs to the SMC family. SMC2 subfamily. In terms of assembly, forms a heterodimer with SMC4. Component of the condensin complex, which contains the SMC2 and SMC4 heterodimer, and three non SMC subunits that probably regulate the complex: CAPH, CAPD2 and CAPG. Highly expressed in roots and young floral buds.

The protein localises to the nucleus. Its function is as follows. Central component of the condensin complex, a complex required for conversion of interphase chromatin into mitotic-like condense chromosomes. The condensin complex probably introduces positive supercoils into relaxed DNA in the presence of type I topoisomerases and converts nicked DNA into positive knotted forms in the presence of type II topoisomerases. Also involved in chromosome segregation in meiosis. The sequence is that of Structural maintenance of chromosomes protein 2-1 (SMC2-1) from Arabidopsis thaliana (Mouse-ear cress).